Consider the following 842-residue polypeptide: Glycogen phosphorylase, muscle form (842 aa).

Position 2 is an N-acetylserine (serine 2). Position 15 is a phosphoserine; by PHK; in form phosphorylase A (serine 15). AMP contacts are provided by aspartate 43 and tyrosine 76. Residues tyrosine 204 and tyrosine 227 each carry the phosphotyrosine modification. 310-319 (RRFKSSKFGC) contacts AMP. Residue serine 430 is modified to Phosphoserine. Residue tyrosine 473 is modified to Phosphotyrosine. Residue lysine 681 is modified to N6-(pyridoxal phosphate)lysine. A phosphoserine mark is found at serine 747 and serine 748.

The protein belongs to the glycogen phosphorylase family. As to quaternary structure, homodimer. Homotetramer; to form the enzymatically active phosphorylase A. Pyridoxal 5'-phosphate is required as a cofactor. Phosphorylation of Ser-15 converts phosphorylase B (unphosphorylated) to phosphorylase A.

The catalysed reaction is [(1-&gt;4)-alpha-D-glucosyl](n) + phosphate = [(1-&gt;4)-alpha-D-glucosyl](n-1) + alpha-D-glucose 1-phosphate. With respect to regulation, allosterically regulated through the non-covalent binding of metabolites, being activated by AMP and inhibited by ATP, ADP, and glucose-6-phosphate. The activity is also controlled by post-translational modifications including phosphorylation. Allosteric enzyme that catalyzes the rate-limiting step in glycogen catabolism, the phosphorolytic cleavage of glycogen to produce glucose-1-phosphate, and plays a central role in maintaining cellular and organismal glucose homeostasis. This is Glycogen phosphorylase, muscle form from Bos taurus (Bovine).